The chain runs to 448 residues: MREPIVAIATPYGESAIGIVRLSGKGVLDLVKKFFKTKREIKPRYAHFGVLYDDKGEELDEGVLIYYKAPHSYTGEDMVELNLHGNPRILKRALELFVNAGARLAEPGEFTKRAFLNGKLDLTQAEAVAELISAKTELARKVALKQLHGELSKHIRPLRETLLELLAYVEADIEFAEEDIPTLTKEQVIQMVDKVIEGINELLKTAKTGKFIREGVKLAIVGRPNVGKSSLFNALLKEERAIVTDIAGTTRDFIEETLQIKGVPVRLVDTAGIRETKDLVERIGVERSKQKVKEADLILFVIDASQEITEEDLRIYEEIKEKDHIVVANKVDLGIRANLEKFKGEKIVKVSALKGTGLEELSEEILKKVGANLEESVNIYISVRHETLLKKAKEVLERFKEEFREKDISPEIAMLDLREASDYLGEILGEITTEDLLGKIFSTFCIGK.

Residues Arg-21, Glu-80, and Lys-119 each contribute to the (6S)-5-formyl-5,6,7,8-tetrahydrofolate site. The TrmE-type G domain occupies 215–370 (GVKLAIVGRP…LSEEILKKVG (156 aa)). Asn-225 contributes to the K(+) binding site. GTP contacts are provided by residues 225–230 (NVGKSS), 244–250 (TDIAGTT), and 269–272 (DTAG). Ser-229 is a Mg(2+) binding site. Residues Thr-244, Ile-246, and Thr-249 each contribute to the K(+) site. Thr-250 is a binding site for Mg(2+). Position 448 (Lys-448) interacts with (6S)-5-formyl-5,6,7,8-tetrahydrofolate.

It belongs to the TRAFAC class TrmE-Era-EngA-EngB-Septin-like GTPase superfamily. TrmE GTPase family. As to quaternary structure, homodimer. Heterotetramer of two MnmE and two MnmG subunits. The cofactor is K(+).

The protein localises to the cytoplasm. Exhibits a very high intrinsic GTPase hydrolysis rate. Involved in the addition of a carboxymethylaminomethyl (cmnm) group at the wobble position (U34) of certain tRNAs, forming tRNA-cmnm(5)s(2)U34. The chain is tRNA modification GTPase MnmE from Aquifex aeolicus (strain VF5).